The sequence spans 78 residues: Translation initiation factor IF-1 (78 aa).

One can recognise an S1-like domain in the interval 2-78 (SKNNLNETES…TRARITYRFK (77 aa)).

This sequence belongs to the IF-1 family. Component of the 30S ribosomal translation pre-initiation complex which assembles on the 30S ribosome in the order IF-2 and IF-3, IF-1 and N-formylmethionyl-tRNA(fMet); mRNA recruitment can occur at any time during PIC assembly.

It localises to the cytoplasm. Its function is as follows. One of the essential components for the initiation of protein synthesis. Stabilizes the binding of IF-2 and IF-3 on the 30S subunit to which N-formylmethionyl-tRNA(fMet) subsequently binds. Helps modulate mRNA selection, yielding the 30S pre-initiation complex (PIC). Upon addition of the 50S ribosomal subunit IF-1, IF-2 and IF-3 are released leaving the mature 70S translation initiation complex. In Onion yellows phytoplasma (strain OY-M), this protein is Translation initiation factor IF-1.